Here is a 274-residue protein sequence, read N- to C-terminus: Putative phosphatase BUsg_029 (274 aa).

Asp-8 functions as the Nucleophile in the catalytic mechanism. Asp-8 is a binding site for Mg(2+). Leu-9 is a binding site for phosphate. Asp-10 is a Mg(2+) binding site. Phosphate contacts are provided by residues 42–43 and Lys-191; that span reads SG. Residue Asp-214 coordinates Mg(2+). Asn-217 is a binding site for phosphate.

This sequence belongs to the HAD-like hydrolase superfamily. Cof family. Mg(2+) serves as cofactor.

The protein is Putative phosphatase BUsg_029 of Buchnera aphidicola subsp. Schizaphis graminum (strain Sg).